The sequence spans 136 residues: Small ribosomal subunit protein uS8c (136 aa).

It belongs to the universal ribosomal protein uS8 family. As to quaternary structure, part of the 30S ribosomal subunit.

The protein localises to the plastid. It localises to the chloroplast. One of the primary rRNA binding proteins, it binds directly to 16S rRNA central domain where it helps coordinate assembly of the platform of the 30S subunit. The polypeptide is Small ribosomal subunit protein uS8c (rps8) (Morus indica (Mulberry)).